Here is a 65-residue protein sequence, read N- to C-terminus: Small ribosomal subunit protein bS21A (65 aa).

Belongs to the bacterial ribosomal protein bS21 family.

This is Small ribosomal subunit protein bS21A from Francisella tularensis subsp. tularensis (strain FSC 198).